Consider the following 357-residue polypeptide: DENN domain-containing protein 10 (357 aa).

The 140-residue stretch at 1-140 (MAAAEVADTQ…TKGICQSEEN (140 aa)) folds into the uDENN domain. The cDENN domain maps to 165–299 (QFGMETVILH…PEKSESHVIQ (135 aa)). Positions 301–357 (IALKTREIFTNLAPFSEVSADGEKRVLNLEALKQKRFPPATENFLYHLAAAEQMLKI) constitute a dDENN domain.

The protein belongs to the DENND10 family. Interacts with the coiled-coil heterodimer of CCDC22 and CCDC93; the interaction is direct. Interacts with RAB27A and RAB27B (GDP-bound forms preferentially).

The protein resides in the late endosome. Functionally, guanine nucleotide exchange factor (GEF) regulating homeostasis of late endocytic pathway, including endosomal positioning, maturation and secretion, possibly through activating Rab proteins such as RAB27A and RAB27B. Promotes the exchange of GDP to GTP, converting inactive GDP-bound RAB27A and RAB27B into their active GTP-bound form. This is DENN domain-containing protein 10 from Homo sapiens (Human).